The chain runs to 29 residues: Lambda-theraphotoxin-Ec2a (29 aa).

Intrachain disulfides connect C2–C16, C9–C21, and C15–C25.

Belongs to the neurotoxin 30 (phrixotoxin) family. Expressed by the venom gland.

It localises to the secreted. Its function is as follows. Insect-selective neurotoxin that potently blocks insect calcium-activated potassium (BKCa) channels (Slo-type) in cockroach dorsal unpaired median (DUM) neurons (IC(50)=3.7 nM). This occurs in the absence of any shifts in the voltage dependence of activation. At high concentrations (330 nM), it partially inhibits cockroach delayed-rectifier potassium channels (Kv) currents. May interact with the turret and/or loop region of the external entrance to the channel and does not project deeply into the pore of the channel. In vivo, does not show toxicity in mice after intracerebroventricular injection of up to 25 pmol/g (1.8 ug/20 g mouse). This is Lambda-theraphotoxin-Ec2a from Eucratoscelus constrictus (African red-rump baboon spider).